The sequence spans 427 residues: Riboflavin transporter rft-1 (427 aa).

Topologically, residues 1 to 2 (MK) are cytoplasmic. Residues 3-23 (TFLFTFCLVAIFGSSSWIGTN) form a helical membrane-spanning segment. Topologically, residues 24 to 42 (SVWMELSLLTAKLPEGWNL) are extracellular. Residues 43–63 (PSYLSAIVQIACLGPLIYSII) form a helical membrane-spanning segment. The Cytoplasmic segment spans residues 64–73 (HKGIKMTIPT). Residues 74-94 (VPLIFIFMVLACICQLGLCFF) traverse the membrane as a helical segment. Residues 95–111 (WDDTGYIFGAIRSWPLY) lie on the Extracellular side of the membrane. The helical transmembrane segment at 112 to 132 (LLLFGLAIVDAISSVLFLPFM) threads the bilayer. Residues 133 to 139 (AQFHPSF) are Cytoplasmic-facing. The chain crosses the membrane as a helical span at residues 140 to 160 (LNAYFVGMGLSALIPSLLSLI). The Extracellular portion of the chain corresponds to 161–184 (QGTSNYWCDDNKTPHYYPPRFSVS). A helical transmembrane segment spans residues 185–205 (MFFLINFFFTCAAVAAFLVLY). Residues 206-261 (KIGAHKNSSQVEPEPKHSIQIIQGDSTTDVNEVNTESSFQETSSIPDSSSATGARL) are Cytoplasmic-facing. A helical transmembrane segment spans residues 262 to 282 (AFLLLTTALVNAQMNGIVTSV). Residues 283-297 (QSYATLVYSQNTYHY) are Extracellular-facing. A helical transmembrane segment spans residues 298–318 (AVTLSNVISPLASYLQFFVKI). Topologically, residues 319 to 322 (RSLP) are cytoplasmic. Residues 323 to 343 (ILAFLTLCSSLTTAVIIYLAA) traverse the membrane as a helical segment. The Extracellular portion of the chain corresponds to 344–353 (LSPNWIFNSE). Residues 354–374 (TAGTIISIASSLIAAGLHSYL) form a helical membrane-spanning segment. At 375–391 (RVMFAALLREGNQKESR) the chain is on the cytoplasmic side. Residues 392–412 (LFWCGAFIQIGSFTGSAIMFP) form a helical membrane-spanning segment. Over 413-427 (LVNVWKLFHSAPSCR) the chain is Extracellular.

The protein belongs to the riboflavin transporter family. Expressed in intestine.

The protein localises to the cell membrane. It carries out the reaction riboflavin(in) = riboflavin(out). With respect to regulation, activity is strongly inhibited by riboflavin analogs, such as lumiflavin and lumichrome. Riboflavin transporter. Riboflavin transport is Na(+)-independent but pH-sensitive. This Caenorhabditis elegans protein is Riboflavin transporter rft-1.